A 703-amino-acid chain; its full sequence is Solute carrier family 28 member 3 (703 aa).

Over residues 1 to 19 (MSRADPGKNSEPSESKMSL) the composition is skewed to basic and acidic residues. Positions 1–93 (MSRADPGKNS…DPEDDSEDEH (93 aa)) are disordered. Topologically, residues 1 to 117 (MSRADPGKNS…FCRKHRVVLR (117 aa)) are cytoplasmic. Over residues 44 to 61 (QNTPGNSTVRNRVVQSGE) the composition is skewed to polar residues. Over residues 63–72 (GHAKQDDRQI) the composition is skewed to basic and acidic residues. A helical membrane pass occupies residues 118-138 (STIWAVLLTGFLALVIAACAI). The Extracellular segment spans residues 139–143 (NFHRA). A helical membrane pass occupies residues 144 to 164 (LPLFVITLVTIFFVIWDHLMA). Residues 165–188 (KYEQRIDDFLSPGRRLLDRHWFWL) lie on the Cytoplasmic side of the membrane. The chain crosses the membrane as a helical span at residues 189–209 (KWVVWSSLILAIILWLSLDTA). Residues 210–212 (KLG) are Extracellular-facing. A helical transmembrane segment spans residues 213–234 (QQNLVSFGGLIMYLILLFLFSK). Over 235-242 (HPTRVYWR) the chain is Cytoplasmic. Residues 243-262 (PVFWGIGLQFLLGLLILRTR) form a helical membrane-spanning segment. Residues 263 to 299 (PGFVAFDWMGRQVQTFLGYTDTGARFVFGEKYTDHFF) are Extracellular-facing. Residues 300-320 (AFKILPIVVFFSTVMSMLYYL) form a helical membrane-spanning segment. At 321–344 (GLMQWIIRKVGWLMLVTMGSSPIE) the chain is on the cytoplasmic side. The helical intramembrane region spans 345–363 (SVVAAGNIFIGQTESPLLV). The Cytoplasmic portion of the chain corresponds to 364–376 (QPYLPHVTKSELH). Residues 377-399 (TIMTAGFATIAGSVLGAYISFGV) traverse the membrane as a helical segment. Residues 400-401 (SS) lie on the Extracellular side of the membrane. A helical membrane pass occupies residues 402–423 (THLLTASVMSAPAALAVAKLFW). Residues 424 to 458 (PETEKPKITLKSAMKMENGDSRNLLEAASQGASSS) lie on the Cytoplasmic side of the membrane. The helical transmembrane segment at 459–484 (IPLVANIAANLIAFLALLSFVNSALS) threads the bilayer. Residues 485–522 (WFGSMFNYPELSFELICSYIFMPFSFMMGVDWQDSFMV) are Extracellular-facing. Residues 523-542 (AKLIGYKTFFNEFVAYDHLS) constitute an intramembrane region (helical). Topologically, residues 543 to 581 (KLINLRKAAGPKFVNGVQQYMSIRSETIATYALCGFANF) are extracellular. Residues 582–592 (GSLGIVIGGLT) traverse the membrane as a helical segment. Over 593 to 605 (SIAPSRKRDIASG) the chain is Cytoplasmic. A helical transmembrane segment spans residues 606–628 (AMRALIAGTIACFMTACIAGILS). Residues 629-703 (DTPVDINCHH…LNCNWIPNKL (75 aa)) are Extracellular-facing.

Belongs to the concentrative nucleoside transporter (CNT) (TC 2.A.41) family. As to quaternary structure, homotrimer.

The protein resides in the cell membrane. It carries out the reaction thymidine(out) + 2 Na(+)(out) = thymidine(in) + 2 Na(+)(in). It catalyses the reaction cytidine(out) + 2 Na(+)(out) = cytidine(in) + 2 Na(+)(in). The enzyme catalyses uridine(out) + 2 Na(+)(out) = uridine(in) + 2 Na(+)(in). The catalysed reaction is adenosine(out) + 2 Na(+)(out) = adenosine(in) + 2 Na(+)(in). It carries out the reaction guanosine(out) + 2 Na(+)(out) = guanosine(in) + 2 Na(+)(in). It catalyses the reaction inosine(out) + 2 Na(+)(out) = inosine(in) + 2 Na(+)(in). In terms of biological role, sodium-dependent, pyrimidine- and purine-selective. Involved in the homeostasis of endogenous nucleosides. Exhibits the transport characteristics of the nucleoside transport system cib or N3 subtype (N3/cib) (with marked transport of both thymidine and inosine). Employs a 2:1 sodium/nucleoside ratio. Also able to transport gemcitabine, 3'-azido-3'-deoxythymidine (AZT), ribavirin and 3-deazauridine. This chain is Solute carrier family 28 member 3 (Slc28a3), found in Mus musculus (Mouse).